A 209-amino-acid chain; its full sequence is Thiamine-phosphate synthase (209 aa).

4-amino-2-methyl-5-(diphosphooxymethyl)pyrimidine is bound by residues 40 to 44 (QLREK) and Asn72. Residues Asp73 and Asp92 each contribute to the Mg(2+) site. Residue Ser111 participates in 4-amino-2-methyl-5-(diphosphooxymethyl)pyrimidine binding. 137–139 (TNS) serves as a coordination point for 2-[(2R,5Z)-2-carboxy-4-methylthiazol-5(2H)-ylidene]ethyl phosphate. Lys140 lines the 4-amino-2-methyl-5-(diphosphooxymethyl)pyrimidine pocket. 2-[(2R,5Z)-2-carboxy-4-methylthiazol-5(2H)-ylidene]ethyl phosphate is bound by residues Gly167 and 187–188 (IS).

This sequence belongs to the thiamine-phosphate synthase family. The cofactor is Mg(2+).

The enzyme catalyses 2-[(2R,5Z)-2-carboxy-4-methylthiazol-5(2H)-ylidene]ethyl phosphate + 4-amino-2-methyl-5-(diphosphooxymethyl)pyrimidine + 2 H(+) = thiamine phosphate + CO2 + diphosphate. It catalyses the reaction 2-(2-carboxy-4-methylthiazol-5-yl)ethyl phosphate + 4-amino-2-methyl-5-(diphosphooxymethyl)pyrimidine + 2 H(+) = thiamine phosphate + CO2 + diphosphate. It carries out the reaction 4-methyl-5-(2-phosphooxyethyl)-thiazole + 4-amino-2-methyl-5-(diphosphooxymethyl)pyrimidine + H(+) = thiamine phosphate + diphosphate. Its pathway is cofactor biosynthesis; thiamine diphosphate biosynthesis; thiamine phosphate from 4-amino-2-methyl-5-diphosphomethylpyrimidine and 4-methyl-5-(2-phosphoethyl)-thiazole: step 1/1. In terms of biological role, condenses 4-methyl-5-(beta-hydroxyethyl)thiazole monophosphate (THZ-P) and 2-methyl-4-amino-5-hydroxymethyl pyrimidine pyrophosphate (HMP-PP) to form thiamine monophosphate (TMP). The sequence is that of Thiamine-phosphate synthase from Clostridium tetani (strain Massachusetts / E88).